The primary structure comprises 84 residues: RNA-binding protein Hfq (84 aa).

Positions 10 to 69 constitute a Sm domain; it reads EPFLNTLRREHVPVSIYLVNGIKLQGQIESFDQYVVLLRNTVTQMVFKHAISTIVPGRAV.

This sequence belongs to the Hfq family. In terms of assembly, homohexamer.

RNA chaperone that binds small regulatory RNA (sRNAs) and mRNAs to facilitate mRNA translational regulation in response to envelope stress, environmental stress and changes in metabolite concentrations. Also binds with high specificity to tRNAs. This chain is RNA-binding protein Hfq, found in Verminephrobacter eiseniae (strain EF01-2).